We begin with the raw amino-acid sequence, 77 residues long: uncharacterized protein (77 aa).

In terms of domain architecture, HTH cro/C1-type spans 13–67 (VLQYMVNNDYSLNQLALEIGVSPATLSRVLNGERRPGQLVIGKMLHYFNLKFEDL). Positions 24-43 (LNQLALEIGVSPATLSRVLN) form a DNA-binding region, H-T-H motif.

It is found in the cytoplasm. This is an uncharacterized protein from Bacillus subtilis (strain 168).